The following is a 237-amino-acid chain: 1-(5-phosphoribosyl)-5-[(5-phosphoribosylamino)methylideneamino] imidazole-4-carboxamide isomerase (237 aa).

Catalysis depends on Asp-8, which acts as the Proton acceptor. Residue Asp-130 is the Proton donor of the active site.

This sequence belongs to the HisA/HisF family.

The protein localises to the cytoplasm. It catalyses the reaction 1-(5-phospho-beta-D-ribosyl)-5-[(5-phospho-beta-D-ribosylamino)methylideneamino]imidazole-4-carboxamide = 5-[(5-phospho-1-deoxy-D-ribulos-1-ylimino)methylamino]-1-(5-phospho-beta-D-ribosyl)imidazole-4-carboxamide. It functions in the pathway amino-acid biosynthesis; L-histidine biosynthesis; L-histidine from 5-phospho-alpha-D-ribose 1-diphosphate: step 4/9. In Caldicellulosiruptor saccharolyticus (strain ATCC 43494 / DSM 8903 / Tp8T 6331), this protein is 1-(5-phosphoribosyl)-5-[(5-phosphoribosylamino)methylideneamino] imidazole-4-carboxamide isomerase.